The primary structure comprises 216 residues: Large ribosomal subunit protein uL3 (216 aa).

Residues 135 to 156 (LGASHGTQRKHRSPGSIGGCAT) form a disordered region.

This sequence belongs to the universal ribosomal protein uL3 family. Part of the 50S ribosomal subunit. Forms a cluster with proteins L14 and L19.

Functionally, one of the primary rRNA binding proteins, it binds directly near the 3'-end of the 23S rRNA, where it nucleates assembly of the 50S subunit. The chain is Large ribosomal subunit protein uL3 from Thermobifida fusca (strain YX).